The primary structure comprises 120 residues: Large ribosomal subunit protein bL19 (120 aa).

This sequence belongs to the bacterial ribosomal protein bL19 family.

Its function is as follows. This protein is located at the 30S-50S ribosomal subunit interface and may play a role in the structure and function of the aminoacyl-tRNA binding site. The protein is Large ribosomal subunit protein bL19 of Marinomonas sp. (strain MWYL1).